Reading from the N-terminus, the 346-residue chain is Uroporphyrinogen decarboxylase (346 aa).

Residues 21-25 (RQAGR), Asp-71, Tyr-146, Ser-201, and His-316 each bind substrate.

The protein belongs to the uroporphyrinogen decarboxylase family. In terms of assembly, homodimer.

Its subcellular location is the cytoplasm. It catalyses the reaction uroporphyrinogen III + 4 H(+) = coproporphyrinogen III + 4 CO2. Its pathway is porphyrin-containing compound metabolism; protoporphyrin-IX biosynthesis; coproporphyrinogen-III from 5-aminolevulinate: step 4/4. Its function is as follows. Catalyzes the decarboxylation of four acetate groups of uroporphyrinogen-III to yield coproporphyrinogen-III. The sequence is that of Uroporphyrinogen decarboxylase from Rickettsia rickettsii (strain Iowa).